Here is a 502-residue protein sequence, read N- to C-terminus: ATP synthase subunit alpha (502 aa).

ATP is bound at residue glycine 169 to threonine 176.

This sequence belongs to the ATPase alpha/beta chains family. As to quaternary structure, F-type ATPases have 2 components, CF(1) - the catalytic core - and CF(0) - the membrane proton channel. CF(1) has five subunits: alpha(3), beta(3), gamma(1), delta(1), epsilon(1). CF(0) has three main subunits: a(1), b(2) and c(9-12). The alpha and beta chains form an alternating ring which encloses part of the gamma chain. CF(1) is attached to CF(0) by a central stalk formed by the gamma and epsilon chains, while a peripheral stalk is formed by the delta and b chains.

The protein localises to the cell membrane. It catalyses the reaction ATP + H2O + 4 H(+)(in) = ADP + phosphate + 5 H(+)(out). Its function is as follows. Produces ATP from ADP in the presence of a proton gradient across the membrane. The alpha chain is a regulatory subunit. This Staphylococcus aureus (strain Mu3 / ATCC 700698) protein is ATP synthase subunit alpha.